Consider the following 306-residue polypeptide: Ribosomal RNA small subunit methyltransferase H (306 aa).

Residues 33-35, Asp-51, Phe-82, Asp-96, and Gln-103 each bind S-adenosyl-L-methionine; that span reads GGY.

It belongs to the methyltransferase superfamily. RsmH family.

It is found in the cytoplasm. The enzyme catalyses cytidine(1402) in 16S rRNA + S-adenosyl-L-methionine = N(4)-methylcytidine(1402) in 16S rRNA + S-adenosyl-L-homocysteine + H(+). Its function is as follows. Specifically methylates the N4 position of cytidine in position 1402 (C1402) of 16S rRNA. The protein is Ribosomal RNA small subunit methyltransferase H of Rickettsia akari (strain Hartford).